The chain runs to 1271 residues: MEATGVLPFVRGVDLSGNDFKGGYFPENVKAMTSLRWLKLNRTGLCYLPEELAALQKLEHLSVSHNHLTTLHGELSSLPSLRAIVARANSLKNSGVPDDIFKLDDLSVLDLSHNQLTECPRELENAKNMLVLNLSHNGIDSIPNQLFINLTDLLYLDLSENRLESLPPQMRRLVHLQTLVLNGNPLLHAQLRQLPAMMALQTLHLRNTQRTQSNLPTSLEGLSNLSDVDLSCNDLTRVPECLYTLPSLRRLNLSSNQIAELSLCIDQWVHLETLNLSRNQLTSLPSAICKLTKLKKLYLNSNKLDFDGLPSGIGKLTSLEEFMAANNNLELIPESLCRCPKLKKLVLNKNRLVTLPEAIHFLTEIQVLDVRENPSLVMPPKPADRTAEWYNIDFSLQNQLRLAGASPATVAAAAAVGSGSKDPLARKMRLRRRKDSAQDVQAKQVLKGMSDVAQEKNKNQEESIDARAPGGKVRRWDQGLEKPRLDYSEFFTEDVGQLPGLTIWQIENFVPVLVEEAFHGKFYEADCYIVLKTFLDDSGSLNWEIYYWIGGEATLDKKACSAIHAVNLRNYLGAECRTVREEMGDESEEFLQVFDNDISYIEGGTASGFYTVEDTHYVTRMYRVYGKKNIKLEPVPLKGSSLDPRFVFLLDQGLDIYVWRGAQATLSNTTKARLFAEKINKNERKGKAEITLLVQGQEPPGFWDVLGGEPSEIKNHVPDDFWPPQPKLYKVGLGLGYLELPQINYKLSVEHKKRPKVELMPGMRLLQSLLDTRCVYILDCWSDVFIWLGRKSPRLVRAAALKLGQELCGMLHRPRHTVVSRSLEGTEAQVFKAKFKNWDDVLTVDYTRNAEAVLQGQGLSGKVKRDTEKTDQMKADLTALFLPRQPPMPLAEAEQLMEEWNEDLDGMEGFVLEGRKFTRLPEEEFGHFYTQDCYVFLCRYWVPVEYEEEEKTEDKEGKASAEAREGEEAAAEAEEKQPEEDFQCIVYFWQGREASNMGWLTFTFSLQKKFESLFPGKLEVVRMTQQQENPKFLSHFKRKFIIHRGKRKVTQGTLQPTLYQIRTNGSALCTRCIQINTDSSLLNSEFCFILKVPFESEDNQGIVYAWVGRASDPDEAKLAEDILNTMFDASYSKQVINEGEEPENFFWVGIGAQKPYDDDAEYMKHTRLFRCSNEKGYFAVTEKCSDFCQDDLADDDIMLLDNGQEVYMWVGTQTSQVEIKLSLKACQVYIQHTRSKEHERPRRLRLVRKGNEQRAFTRCFHAWSTFRQAPA.

Met-1 carries the post-translational modification N-acetylmethionine. The interval 1 to 427 (MEATGVLPFV…SGSKDPLARK (427 aa)) is interaction with LRRFIP1 and LRRFIP2. LRR repeat units lie at residues 7 to 32 (LPFV…VKAM), 33 to 55 (TSLR…LAAL), 56 to 78 (QKLE…LSSL), 80 to 103 (SLRA…IFKL), 104 to 126 (DDLS…LENA), 127 to 149 (KNML…LFIN), 150 to 173 (LTDL…MRRL), 175 to 196 (HLQT…QLPA), 197 to 222 (MMAL…LEGL), 223 to 245 (SNLS…LYTL), 247 to 268 (SLRR…IDQW), 269 to 291 (VHLE…ICKL), 293 to 316 (KLKK…IGKL), 317 to 339 (TSLE…LCRC), 340 to 363 (PKLK…HFLT), and 365 to 385 (IQVL…PADR). Lys-21 bears the N6-acetyllysine mark. At Ser-406 the chain carries Phosphoserine. At Ser-436 the chain carries Phosphoserine; by SGK3. Residues 495–827 (VGQLPGLTIW…VVSRSLEGTE (333 aa)) are interaction with ACTL6A. Gelsolin-like repeat units follow at residues 509–591 (FVPV…EEFL), 629–703 (NIKL…PGFW), and 759–831 (LMPG…AQVF). Ser-860 is modified (phosphoserine). The interval 951 to 977 (KTEDKEGKASAEAREGEEAAAEAEEKQ) is disordered. The segment covering 952-967 (TEDKEGKASAEAREGE) has biased composition (basic and acidic residues). The segment covering 968–977 (EAAAEAEEKQ) has biased composition (acidic residues). A Gelsolin-like 4 repeat occupies 1183 to 1256 (KCSDFCQDDL…VRKGNEQRAF (74 aa)).

As to quaternary structure, interacts with actin, ACTL6A and NCOA2. Interacts with CARM1. Interacts with LRRFIP1, LRRFIP2 and MYD88. Upon LPS stimulation, LRRFIP2 competes for MYD88-binding; LRRFIP1 constitutively blocks the interaction with MyD88, even in the absence of LPS. Interacts with the nuclear receptors ESR1 and THRB. Interacts with SGK3. Interacts (via the gelsolin-like region) with TMOD1 and TMOD3. Interacts with LMOD2, VCL, GSN and DES. Expressed in blastocyst.

It localises to the nucleus. Its subcellular location is the cytoplasm. The protein resides in the cytoskeleton. The protein localises to the microtubule organizing center. It is found in the centrosome. It localises to the cell junction. Its subcellular location is the focal adhesion. The protein resides in the cell projection. The protein localises to the podosome. Its function is as follows. Is a regulator of actin polymerization, required for proper myofibril organization and regulation of the length of sarcomeric thin filaments. It also plays a role in the assembly of cardiomyocyte cell adhesion complexes. Regulates cytoskeletal rearrangements involved in cytokinesis and cell migration, by inhibiting Rac1-dependent paxillin phosphorylation. May play a role as coactivator in transcriptional activation by hormone-activated nuclear receptors (NR) and acts in cooperation with NCOA2 and CARM1. Involved in estrogen hormone signaling. This chain is Protein flightless-1 homolog (Flii), found in Mus musculus (Mouse).